A 528-amino-acid chain; its full sequence is Phosphoenolpyruvate carboxykinase (ATP) (528 aa).

3 residues coordinate substrate: arginine 54, tyrosine 190, and lysine 196. ATP is bound by residues lysine 196, histidine 215, and 231–239; that span reads GLSGTGKTT. Positions 196 and 215 each coordinate Mn(2+). Aspartate 252 provides a ligand contact to Mn(2+). 3 residues coordinate ATP: glutamate 280, arginine 316, and threonine 441. Arginine 316 is a binding site for substrate.

The protein belongs to the phosphoenolpyruvate carboxykinase (ATP) family. Mn(2+) serves as cofactor.

It localises to the cytoplasm. The catalysed reaction is oxaloacetate + ATP = phosphoenolpyruvate + ADP + CO2. Its pathway is carbohydrate biosynthesis; gluconeogenesis. Functionally, involved in the gluconeogenesis. Catalyzes the conversion of oxaloacetate (OAA) to phosphoenolpyruvate (PEP) through direct phosphoryl transfer between the nucleoside triphosphate and OAA. The chain is Phosphoenolpyruvate carboxykinase (ATP) from Sulfurimonas denitrificans (strain ATCC 33889 / DSM 1251) (Thiomicrospira denitrificans (strain ATCC 33889 / DSM 1251)).